Reading from the N-terminus, the 301-residue chain is Thioredoxin-related transmembrane protein 2-A (301 aa).

A signal peptide spans Met1–Lys19. Topologically, residues Trp20 to Arg111 are extracellular. The chain crosses the membrane as a helical span at residues Phe112–Tyr132. Positions Val122–Lys269 constitute a Thioredoxin domain. Residues Met133 to Lys301 lie on the Cytoplasmic side of the membrane. Positions Ser268–Lys301 are disordered. Residues Leu280–Ser295 are compositionally biased toward acidic residues. Residues Lys298–Lys301 carry the Di-lysine motif motif.

In terms of assembly, monomer. Homodimer; disulfide-linked. Occurs in both reduced and oxidized monomeric form. Oxidative conditions increase homodimerization.

It is found in the endoplasmic reticulum membrane. The protein resides in the mitochondrion membrane. In terms of biological role, endoplasmic reticulum and mitochondria-associated protein that probably functions as a regulator of cellular redox state and thereby regulates protein post-translational modification, protein folding and mitochondrial activity. In Danio rerio (Zebrafish), this protein is Thioredoxin-related transmembrane protein 2-A.